Consider the following 355-residue polypeptide: Blue-sensitive opsin P467 (355 aa).

The Extracellular segment spans residues 1–36 (MNGTEGINFYVPLSNKTGLVRSPFEYPQYYLADPWK). N-linked (GlcNAc...) asparagine glycans are attached at residues N2 and N15. The chain crosses the membrane as a helical span at residues 37-61 (FKVLSFYMFFLIAAGMPLNGLTLFV). Topologically, residues 62–73 (TFQHKKLRQPLN) are cytoplasmic. A helical transmembrane segment spans residues 74 to 98 (YILVNLAAANLVTVCCGFTVTFYAS). Over 99-113 (WYAYFVFGPIGCAIE) the chain is Extracellular. An intrachain disulfide couples C110 to C187. Residues 114–133 (GFFATIGGQVALWSLVVLAI) traverse the membrane as a helical segment. The Cytoplasmic portion of the chain corresponds to 134-152 (ERYIVICKPMGNFRFSATH). A helical membrane pass occupies residues 153 to 176 (AIMGIAFTWFMALACAGPPLFGWS). Topologically, residues 177-202 (RFIPEGMQCSCGPDYYTLNPDFHNES) are extracellular. An N-linked (GlcNAc...) asparagine glycan is attached at N200. Residues 203–230 (YVIYMFIVHFTVPMVVIFFSYGRLVCKV) form a helical membrane-spanning segment. The Cytoplasmic portion of the chain corresponds to 231-252 (REAAAQQQESATTQKAEKEVTR). The helical transmembrane segment at 253–276 (MVILMVLGFLLAWTPYAATAIWIF) threads the bilayer. Residues 277 to 284 (TNRGAAFS) lie on the Extracellular side of the membrane. A helical transmembrane segment spans residues 285–309 (VTFMTIPAFFSKSSSIYNPIIYVLL). K296 is modified (N6-(retinylidene)lysine). The Cytoplasmic segment spans residues 310–355 (NKQFRNCMVTTICCGKNPFGDEDVSSSVSQSKTEVSSVSSSQVAPA). Positions 333 to 355 (VSSSVSQSKTEVSSVSSSQVAPA) are disordered. Low complexity predominate over residues 334 to 355 (SSSVSQSKTEVSSVSSSQVAPA).

Belongs to the G-protein coupled receptor 1 family. Opsin subfamily. Post-translationally, phosphorylated on some or all of the serine and threonine residues present in the C-terminal region. In this lizard the color pigments are found in the rod-shaped photoreceptor cells which have been derived from ancestral cone-like photoreceptors.

It localises to the membrane. Functionally, visual pigments are the light-absorbing molecules that mediate vision. They consist of an apoprotein, opsin, covalently linked to cis-retinal. The chain is Blue-sensitive opsin P467 from Gekko gecko (Tokay gecko).